Here is a 588-residue protein sequence, read N- to C-terminus: Neuropeptide-like 1 (588 aa).

Residues 1 to 179 (MQCIPKKTFM…DPEVLEYSPD (179 aa)) constitute a propeptide that is removed on maturation. Residues 115–143 (NGDLPITIQERESDNDDEEKRSASSSDNV) form a disordered region. Threonine 194 carries the post-translational modification Threonine amide. Serine amide is present on residues serine 210, serine 227, and serine 244. Tyrosine 260 carries the post-translational modification Tyrosine amide. Glutamate 281 bears the Glutamic acid 1-amide mark. Positions 285 to 299 (SIASLARSGDWPSVA) are excised as a propeptide. Tyrosine 318 is subject to Tyrosine amide. The propeptide occupies 321–588 (SLSDDREAPS…SNSHIAPRSM (268 aa)). The tract at residues 342 to 382 (GNSEGKENEWQATPFTVSEDLDEGKAKNRSNRRIEASQTRH) is disordered.

It is found in the secreted. The sequence is that of Neuropeptide-like 1 from Camponotus floridanus (Florida carpenter ant).